The chain runs to 212 residues: Glutathione S-transferase P 1 (212 aa).

The region spanning 2–83 (PGYVLTYFPV…YLGNKHGLTG (82 aa)) is the GST N-terminal domain. Residues Tyr-8, Arg-14, Trp-39, Lys-47, 54–55 (QL), and 67–68 (QS) each bind glutathione. In terms of domain architecture, GST C-terminal spans 85-206 (NDEERGHIDM…KSDARNKRPI (122 aa)).

This sequence belongs to the GST superfamily. Pi family. In terms of assembly, homodimer. Expressed only in embryos. Not expressed in liver, lung, heart, kidney and ovary.

It localises to the cytoplasm. Its subcellular location is the mitochondrion. The protein resides in the nucleus. It catalyses the reaction RX + glutathione = an S-substituted glutathione + a halide anion + H(+). In terms of biological role, conjugation of reduced glutathione to a wide number of exogenous and endogenous hydrophobic electrophiles. Highly active towards 1-chloro-2,4-dinitrobenzene and organic isothiocyanates, but shows no detectable activity towards 1,2-dichloro-4-nitrobenzene, p-nitrobenzylchloride, trans-4-phenyl-3-buten-2-one (tPBO) and ethacrynic acid. May be associated with cellular proliferation. This Xenopus laevis (African clawed frog) protein is Glutathione S-transferase P 1 (gstp1).